The primary structure comprises 121 residues: C-type natriuretic peptide 4 (121 aa).

The first 22 residues, 1–22, serve as a signal peptide directing secretion; it reads MNLSYLVACGLLVTFLSDKMDA. Positions 23–96 are excised as a propeptide; it reads QPLTPAQQKS…SRRHKSGSKK (74 aa). Residues 80-109 are disordered; the sequence is LLNDQPASRRHKSGSKKGGSTSRSGCFGHK. An intrachain disulfide couples Cys105 to Cys121.

The protein belongs to the natriuretic peptide family. As to expression, brain, spinal cord, spleen, heart and fin, and to a lower extent in gill and ovary.

Its subcellular location is the secreted. Its function is as follows. Exhibits natriuretic and vasodepressant activity. Has cGMP-stimulating activity. May help to regulate body fluid homeostasis in a variety of aquatic environments. This is C-type natriuretic peptide 4 from Oryzias latipes (Japanese rice fish).